Reading from the N-terminus, the 103-residue chain is Large ribosomal subunit protein bL21 (103 aa).

Belongs to the bacterial ribosomal protein bL21 family. In terms of assembly, part of the 50S ribosomal subunit. Contacts protein L20.

This protein binds to 23S rRNA in the presence of protein L20. This Alcanivorax borkumensis (strain ATCC 700651 / DSM 11573 / NCIMB 13689 / SK2) protein is Large ribosomal subunit protein bL21.